Reading from the N-terminus, the 229-residue chain is Heptaprenylglyceryl phosphate synthase (229 aa).

Residue Lys12 participates in sn-glycerol 1-phosphate binding. Positions 14 and 40 each coordinate Mg(2+). Residues 159 to 164 (YIEYSG), Gly189, and 209 to 210 (GN) each bind sn-glycerol 1-phosphate.

The protein belongs to the GGGP/HepGP synthase family. Group I subfamily. In terms of assembly, homodimer. Mg(2+) serves as cofactor.

It catalyses the reaction sn-glycerol 1-phosphate + all-trans-heptaprenyl diphosphate = 3-heptaprenyl-sn-glycero-1-phosphate + diphosphate. It functions in the pathway membrane lipid metabolism; glycerophospholipid metabolism. In terms of biological role, prenyltransferase that catalyzes in vivo the transfer of the heptaprenyl moiety of heptaprenyl pyrophosphate (HepPP; 35 carbon atoms) to the C3 hydroxyl of sn-glycerol-1-phosphate (G1P), producing heptaprenylglyceryl phosphate (HepGP). This reaction is an ether-bond-formation step in the biosynthesis of archaea-type G1P-based membrane lipids found in Bacillales. The protein is Heptaprenylglyceryl phosphate synthase of Oceanobacillus iheyensis (strain DSM 14371 / CIP 107618 / JCM 11309 / KCTC 3954 / HTE831).